A 393-amino-acid chain; its full sequence is 1-deoxy-D-xylulose 5-phosphate reductoisomerase (393 aa).

NADPH is bound by residues T13, G14, S15, I16, and N128. A 1-deoxy-D-xylulose 5-phosphate-binding site is contributed by K129. E130 is an NADPH binding site. D154 is a binding site for Mn(2+). 1-deoxy-D-xylulose 5-phosphate is bound by residues S155, E156, S178, and H201. E156 serves as a coordination point for Mn(2+). G207 contributes to the NADPH binding site. 4 residues coordinate 1-deoxy-D-xylulose 5-phosphate: S214, N219, K220, and E223. Mn(2+) is bound at residue E223.

It belongs to the DXR family. It depends on Mg(2+) as a cofactor. Requires Mn(2+) as cofactor.

It catalyses the reaction 2-C-methyl-D-erythritol 4-phosphate + NADP(+) = 1-deoxy-D-xylulose 5-phosphate + NADPH + H(+). It functions in the pathway isoprenoid biosynthesis; isopentenyl diphosphate biosynthesis via DXP pathway; isopentenyl diphosphate from 1-deoxy-D-xylulose 5-phosphate: step 1/6. Its function is as follows. Catalyzes the NADPH-dependent rearrangement and reduction of 1-deoxy-D-xylulose-5-phosphate (DXP) to 2-C-methyl-D-erythritol 4-phosphate (MEP). This chain is 1-deoxy-D-xylulose 5-phosphate reductoisomerase, found in Acidithiobacillus ferrooxidans (strain ATCC 23270 / DSM 14882 / CIP 104768 / NCIMB 8455) (Ferrobacillus ferrooxidans (strain ATCC 23270)).